The following is a 302-amino-acid chain: Protein TILLER ANGLE CONTROL 1 (302 aa).

The IGT motif motif lies at 57–63 (GILTIGT). Disordered regions lie at residues 82-115 (ESEE…VEDE) and 159-180 (EGSS…KNKK). Residues 99-115 (DDDDDDDEHYDHSVEDE) show a composition bias toward acidic residues. A compositionally biased stretch (polar residues) spans 162–175 (SEISTKPDQSANDQ).

It belongs to the TAC family. Highly expressed in flower buds. Expressed in branch attachment sites, vegetative buds and young fruits.

Its function is as follows. Involved in the regulation of axillary shoot growth angle. Promotes horizontal shoot growth. This Prunus persica (Peach) protein is Protein TILLER ANGLE CONTROL 1.